Here is a 262-residue protein sequence, read N- to C-terminus: ATP synthase subunit a (262 aa).

6 consecutive transmembrane segments (helical) span residues 24-44 (AVHLDTLFFSLLAGVIFLFVF), 84-104 (VIAPLALTIFCWVFIMNAIDL), 129-149 (DISATLGMSICVFFLILFYTV), 165-185 (PFNHWVFIPVNFILETVTLLA), 194-214 (LFGNMYAGELIFILIAVMYMA), and 228-248 (LVWAIFHILVITLQAFIFMML).

It belongs to the ATPase A chain family. As to quaternary structure, F-type ATPases have 2 components, CF(1) - the catalytic core - and CF(0) - the membrane proton channel. CF(1) has five subunits: alpha(3), beta(3), gamma(1), delta(1), epsilon(1). CF(0) has three main subunits: a(1), b(2) and c(9-12). The alpha and beta chains form an alternating ring which encloses part of the gamma chain. CF(1) is attached to CF(0) by a central stalk formed by the gamma and epsilon chains, while a peripheral stalk is formed by the delta and b chains.

The protein resides in the cell inner membrane. Key component of the proton channel; it plays a direct role in the translocation of protons across the membrane. This Actinobacillus pleuropneumoniae serotype 7 (strain AP76) protein is ATP synthase subunit a.